The sequence spans 479 residues: F-box/LRR-repeat protein 16 (479 aa).

The disordered stretch occupies residues 1–62 (MSSPGIDGDP…PTLPPPSLAA (62 aa)). The span at 47 to 60 (CQPPPPPTLPPPSL) shows a compositional bias: pro residues. Residue R92 is modified to Omega-N-methylarginine. The F-box domain occupies 94 to 139 (PLATDEKILNGLFWYFSACEKCVLAQVCKAWRRVLYQPKFWAGLTP). LRR repeat units follow at residues 244–266 (ITSLSVSDCINVADDAIAAISQL), 267–290 (LPNLAELSLQAYHVTDTALAYFTA), 319–343 (LPNLTALSLSGCSKVTDDGVELVAE), 345–369 (LRKLRSLDLSWCPRITDMALEYVAC), 371–395 (LHRLEELVLDRCVRITDTGLSYLST), 396–420 (MSSLRSLYLRWCCQVQDFGLKHLLA), and 446–470 (LQELEELELTNCPGATPELFKYFSQ).

As to quaternary structure, interacts with SKP1 and CUL1.

In terms of biological role, substrate-recognition component of the SCF (SKP1-CUL1-F-box protein)-type E3 ubiquitin ligase complex. The sequence is that of F-box/LRR-repeat protein 16 (FBXL16) from Homo sapiens (Human).